Reading from the N-terminus, the 198-residue chain is SCO2-like protein RF_0043 (198 aa).

Belongs to the SCO1/2 family.

The sequence is that of SCO2-like protein RF_0043 from Rickettsia felis (strain ATCC VR-1525 / URRWXCal2) (Rickettsia azadi).